A 348-amino-acid chain; its full sequence is Ileal sodium/bile acid cotransporter (348 aa).

Over 1–28 (MDNSSVCPPNATVCEGDSCVVPESNFNA) the chain is Extracellular. N3 and N10 each carry an N-linked (GlcNAc...) asparagine glycan. The chain crosses the membrane as a helical span at residues 29–49 (ILNTVMSTVLTILLAMVMFSM). At 50 to 87 (GCNVEVHKFLGHIKRPWGIFVGFLCQFGIMPLTGFILS) the chain is on the cytoplasmic side. Residues 88 to 108 (VASGILPVQAVVVLIMGCCPG) traverse the membrane as a helical segment. Residues 109-126 (GTGSNILAYWIDGDMDLS) are Extracellular-facing. Residues 127–147 (VSMTTCSTLLALGMMPLCLFV) traverse the membrane as a helical segment. Residues 148–157 (YTKMWVDSGT) are Cytoplasmic-facing. Residues 158–178 (IVIPYDSIGISLVALVIPVSF) traverse the membrane as a helical segment. The Extracellular portion of the chain corresponds to 179–195 (GMFVNHKWPQKAKIILK). A helical transmembrane segment spans residues 196–216 (IGSITGVILIVLIAVIGGILY). Over 217–224 (QSAWIIEP) the chain is Cytoplasmic. The helical transmembrane segment at 225-245 (KLWIIGTIFPIAGYSLGFFLA) threads the bilayer. The Extracellular portion of the chain corresponds to 246-284 (RLAGQPWYRCRTVALETGMQNTQLCSTIVQLSFSPEDLN). A helical transmembrane segment spans residues 285–305 (LVFTFPLIYTVFQLVFAAVIL). The Cytoplasmic portion of the chain corresponds to 306–348 (GIYVTYRKCYGKNDAEFLEKTDNEMDSRPSFDETNKGFQPDEK). The disordered stretch occupies residues 328–348 (NEMDSRPSFDETNKGFQPDEK). S335 carries the phosphoserine modification.

Belongs to the bile acid:sodium symporter (BASS) (TC 2.A.28) family. Monomer and homodimer. As to expression, expressed in ileum.

The protein resides in the membrane. It carries out the reaction taurocholate(out) + 2 Na(+)(out) = taurocholate(in) + 2 Na(+)(in). The enzyme catalyses cholate(out) + 2 Na(+)(out) = cholate(in) + 2 Na(+)(in). The catalysed reaction is taurochenodeoxycholate(out) + 2 Na(+)(out) = taurochenodeoxycholate(in) + 2 Na(+)(in). It catalyses the reaction tauroursodeoxycholate(out) + 2 Na(+)(out) = tauroursodeoxycholate(in) + 2 Na(+)(in). It carries out the reaction glycocholate(out) + 2 Na(+)(out) = glycocholate(in) + 2 Na(+)(in). The enzyme catalyses tauronorcholate(out) + 2 Na(+)(out) = tauronorcholate(in) + 2 Na(+)(in). The catalysed reaction is tauroallocholate(out) + 2 Na(+)(out) = tauroallocholate(in) + 2 Na(+)(in). It catalyses the reaction taurodeoxycholate(out) + 2 Na(+)(out) = taurodeoxycholate(in) + 2 Na(+)(in). It carries out the reaction tauro-beta-muricholate(out) + 2 Na(+)(out) = tauro-beta-muricholate(in) + 2 Na(+)(in). Plays a critical role in the sodium-dependent reabsorption of bile acids from the lumen of the small intestine. Transports various bile acids, unconjugated or conjugated, such as cholate and taurocholate. Also responsible for bile acid transport in the renal proximal tubules, a salvage mechanism that helps conserve bile acids. Works collaboratively with the Na(+)-taurocholate cotransporting polypeptide (NTCP), the organic solute transporter (OST), and the bile salt export pump (BSEP), to ensure efficacious biological recycling of bile acids during enterohepatic circulation. The protein is Ileal sodium/bile acid cotransporter (Slc10a2) of Mus musculus (Mouse).